The primary structure comprises 195 residues: Probable GTP-binding protein EngB (195 aa).

In terms of domain architecture, EngB-type G spans 22 to 195 (GRPEVALAGR…WAALLPFLTE (174 aa)). GTP is bound by residues 30–37 (GRSNVGKS), 57–61 (GKTQT), 75–78 (DVPG), 142–145 (TKAD), and 174–176 (FSS). Mg(2+) contacts are provided by Ser-37 and Thr-59.

Belongs to the TRAFAC class TrmE-Era-EngA-EngB-Septin-like GTPase superfamily. EngB GTPase family. The cofactor is Mg(2+).

Necessary for normal cell division and for the maintenance of normal septation. This chain is Probable GTP-binding protein EngB, found in Geobacillus thermodenitrificans (strain NG80-2).